We begin with the raw amino-acid sequence, 149 residues long: UPF0260 protein PA1299 (149 aa).

It belongs to the UPF0260 family.

The polypeptide is UPF0260 protein PA1299 (Pseudomonas aeruginosa (strain ATCC 15692 / DSM 22644 / CIP 104116 / JCM 14847 / LMG 12228 / 1C / PRS 101 / PAO1)).